We begin with the raw amino-acid sequence, 337 residues long: Ribosomal RNA small subunit methyltransferase H (337 aa).

S-adenosyl-L-methionine contacts are provided by residues 35-37 (GGY), Asp-54, Phe-81, Asp-102, and Gln-109. Residues 286–316 (PVGPSEAEAAANPRARSAKLRAGERTDAPAP) are disordered. A compositionally biased stretch (low complexity) spans 289 to 300 (PSEAEAAANPRA).

It belongs to the methyltransferase superfamily. RsmH family.

It is found in the cytoplasm. The catalysed reaction is cytidine(1402) in 16S rRNA + S-adenosyl-L-methionine = N(4)-methylcytidine(1402) in 16S rRNA + S-adenosyl-L-homocysteine + H(+). In terms of biological role, specifically methylates the N4 position of cytidine in position 1402 (C1402) of 16S rRNA. The protein is Ribosomal RNA small subunit methyltransferase H of Methylobacterium sp. (strain 4-46).